Here is a 142-residue protein sequence, read N- to C-terminus: Large ribosomal subunit protein uL11 (142 aa).

This sequence belongs to the universal ribosomal protein uL11 family. In terms of assembly, part of the ribosomal stalk of the 50S ribosomal subunit. Interacts with L10 and the large rRNA to form the base of the stalk. L10 forms an elongated spine to which L12 dimers bind in a sequential fashion forming a multimeric L10(L12)X complex. Post-translationally, one or more lysine residues are methylated.

Forms part of the ribosomal stalk which helps the ribosome interact with GTP-bound translation factors. The chain is Large ribosomal subunit protein uL11 from Mesorhizobium japonicum (strain LMG 29417 / CECT 9101 / MAFF 303099) (Mesorhizobium loti (strain MAFF 303099)).